The primary structure comprises 218 residues: Ribonuclease T (218 aa).

The 175-residue stretch at 20-194 (VVIDVETAGF…YDAERTAELF (175 aa)) folds into the Exonuclease domain. Mg(2+) is bound by residues Asp23, Glu25, His181, and Asp186. Catalysis depends on His181, which acts as the Proton donor/acceptor.

This sequence belongs to the RNase T family. As to quaternary structure, homodimer. Mg(2+) serves as cofactor.

Trims short 3' overhangs of a variety of RNA species, leaving a one or two nucleotide 3' overhang. Responsible for the end-turnover of tRNA: specifically removes the terminal AMP residue from uncharged tRNA (tRNA-C-C-A). Also appears to be involved in tRNA biosynthesis. The protein is Ribonuclease T of Baumannia cicadellinicola subsp. Homalodisca coagulata.